Consider the following 261-residue polypeptide: 3-deoxy-manno-octulosonate cytidylyltransferase 1 (261 aa).

Belongs to the KdsB family.

It localises to the cytoplasm. The catalysed reaction is 3-deoxy-alpha-D-manno-oct-2-ulosonate + CTP = CMP-3-deoxy-beta-D-manno-octulosonate + diphosphate. The protein operates within nucleotide-sugar biosynthesis; CMP-3-deoxy-D-manno-octulosonate biosynthesis; CMP-3-deoxy-D-manno-octulosonate from 3-deoxy-D-manno-octulosonate and CTP: step 1/1. It functions in the pathway bacterial outer membrane biogenesis; lipopolysaccharide biosynthesis. In terms of biological role, activates KDO (a required 8-carbon sugar) for incorporation into bacterial lipopolysaccharide in Gram-negative bacteria. This Burkholderia lata (strain ATCC 17760 / DSM 23089 / LMG 22485 / NCIMB 9086 / R18194 / 383) protein is 3-deoxy-manno-octulosonate cytidylyltransferase 1.